Consider the following 123-residue polypeptide: Large ribosomal subunit protein bL12 (123 aa).

Belongs to the bacterial ribosomal protein bL12 family. Homodimer. Part of the ribosomal stalk of the 50S ribosomal subunit. Forms a multimeric L10(L12)X complex, where L10 forms an elongated spine to which 2 to 4 L12 dimers bind in a sequential fashion. Binds GTP-bound translation factors.

Its function is as follows. Forms part of the ribosomal stalk which helps the ribosome interact with GTP-bound translation factors. Is thus essential for accurate translation. This Rickettsia bellii (strain OSU 85-389) protein is Large ribosomal subunit protein bL12.